A 364-amino-acid chain; its full sequence is tRNA 2-selenouridine synthase (364 aa).

A Rhodanese domain is found at 14–137; it reads LIADTPIIDV…LRQAAIQATI (124 aa). Cys97 acts as the S-selanylcysteine intermediate in catalysis.

The protein belongs to the SelU family. As to quaternary structure, monomer.

It catalyses the reaction 5-methylaminomethyl-2-thiouridine(34) in tRNA + selenophosphate + (2E)-geranyl diphosphate + H2O + H(+) = 5-methylaminomethyl-2-selenouridine(34) in tRNA + (2E)-thiogeraniol + phosphate + diphosphate. It carries out the reaction 5-methylaminomethyl-2-thiouridine(34) in tRNA + (2E)-geranyl diphosphate = 5-methylaminomethyl-S-(2E)-geranyl-thiouridine(34) in tRNA + diphosphate. The catalysed reaction is 5-methylaminomethyl-S-(2E)-geranyl-thiouridine(34) in tRNA + selenophosphate + H(+) = 5-methylaminomethyl-2-(Se-phospho)selenouridine(34) in tRNA + (2E)-thiogeraniol. The enzyme catalyses 5-methylaminomethyl-2-(Se-phospho)selenouridine(34) in tRNA + H2O = 5-methylaminomethyl-2-selenouridine(34) in tRNA + phosphate. In terms of biological role, involved in the post-transcriptional modification of the uridine at the wobble position (U34) of tRNA(Lys), tRNA(Glu) and tRNA(Gln). Catalyzes the conversion of 2-thiouridine (S2U-RNA) to 2-selenouridine (Se2U-RNA). Acts in a two-step process involving geranylation of 2-thiouridine (S2U) to S-geranyl-2-thiouridine (geS2U) and subsequent selenation of the latter derivative to 2-selenouridine (Se2U) in the tRNA chain. The polypeptide is tRNA 2-selenouridine synthase (Shigella sonnei (strain Ss046)).